A 64-amino-acid chain; its full sequence is uncharacterized protein (64 aa).

This is an uncharacterized protein from Saccharomyces cerevisiae (strain ATCC 204508 / S288c) (Baker's yeast).